A 106-amino-acid polypeptide reads, in one-letter code: Small ribosomal subunit protein bS18 (106 aa).

A compositionally biased stretch (basic and acidic residues) spans 1–22 (MSEETTVRPERTERSERPERPQ). The interval 1-34 (MSEETTVRPERTERSERPERPQYRGNGPRKRRPF) is disordered.

The protein belongs to the bacterial ribosomal protein bS18 family. Part of the 30S ribosomal subunit. Forms a tight heterodimer with protein bS6.

Binds as a heterodimer with protein bS6 to the central domain of the 16S rRNA, where it helps stabilize the platform of the 30S subunit. The protein is Small ribosomal subunit protein bS18 of Geobacter metallireducens (strain ATCC 53774 / DSM 7210 / GS-15).